We begin with the raw amino-acid sequence, 259 residues long: GTP cyclohydrolase FolE2 (259 aa).

This sequence belongs to the GTP cyclohydrolase IV family.

It catalyses the reaction GTP + H2O = 7,8-dihydroneopterin 3'-triphosphate + formate + H(+). Its pathway is cofactor biosynthesis; 7,8-dihydroneopterin triphosphate biosynthesis; 7,8-dihydroneopterin triphosphate from GTP: step 1/1. Functionally, converts GTP to 7,8-dihydroneopterin triphosphate. In Thermotoga neapolitana (strain ATCC 49049 / DSM 4359 / NBRC 107923 / NS-E), this protein is GTP cyclohydrolase FolE2.